The chain runs to 174 residues: Variant surface antigen B (174 aa).

The first 29 residues, 1 to 29 (MKKSIFSKKLLVSFGSLVALASIPLIAIS), serve as a signal peptide directing secretion. Cys-30 carries the N-palmitoyl cysteine lipid modification. Residue Cys-30 is the site of S-diacylglycerol cysteine attachment. The tract at residues 32-174 (QTNTDKSQQP…SQDSGNGSTK (143 aa)) is disordered. Residues 38–49 (SQQPGSGSSTSG) show a composition bias toward low complexity. Residues 50 to 75 (GQSGTGLGSGTTTGGQSGTTTGGRSG) show a composition bias toward gly residues. Residues 76 to 97 (SGSSSSTTGGQTGTGSDSQDSG) show a composition bias toward low complexity. 7 tandem repeats follow at residues 88 to 99 (GTGSDSQDSGAK), 100 to 111 (GTGSDSQDSGAK), 112 to 123 (GTGSDSQDSGAK), 124 to 135 (GTGSDSQDSGAK), 136 to 147 (GTGSDSQDSGAK), 148 to 159 (GTGSDSQDSGAK), and 160 to 171 (GTGSDSQDSGNG). A 7 X 12 AA tandem repeats region spans residues 88 to 171 (GTGSDSQDSG…GSDSQDSGNG (84 aa)). The span at 102–174 (GSDSQDSGAK…SQDSGNGSTK (73 aa)) shows a compositional bias: polar residues.

The protein localises to the cell membrane. Responsible for the antigenic diversity for host adaptation. The sequence is that of Variant surface antigen B (vlpB) from Mesomycoplasma hyorhinis (Mycoplasma hyorhinis).